Consider the following 422-residue polypeptide: Synaptotagmin-2 (422 aa).

A disordered region spans residues 1-43 (MRNIFKRNQEPNVAPATTTATMPLAPVAPADNSTESTGPGESQ). Residues 1-60 (MRNIFKRNQEPNVAPATTTATMPLAPVAPADNSTESTGPGESQEDMFAKLKEKFFNEINK) are Vesicular-facing. Over residues 14-30 (APATTTATMPLAPVAPA) the composition is skewed to low complexity. The segment covering 31-40 (DNSTESTGPG) has biased composition (polar residues). The N-linked (GlcNAc...) asparagine glycan is linked to asparagine 32. Residues 61–87 (IPLPPWALIAMAVVAGLLLLTCCFCIC) form a helical membrane-spanning segment. Topologically, residues 88-422 (KKCCCKKKKN…EVDALLGKNK (335 aa)) are cytoplasmic. Residues 102–141 (GKGMKNAMNMKDMKGGQDDDDAETGLTEGEGEGEEEKEPE) are disordered. The segment covering 119 to 139 (DDDDAETGLTEGEGEGEEEKE) has biased composition (acidic residues). Phosphothreonine is present on residues threonine 125 and threonine 128. Residues 136 to 382 (EEKEPENLGK…AIGKIFVGSN (247 aa)) are phospholipid binding. C2 domains are found at residues 142-261 (NLGK…EEWR) and 273-406 (KLGD…AQWH). Ca(2+) is bound by residues leucine 172, aspartate 173, and aspartate 179. Threonine 202 is modified (phosphothreonine). Tyrosine 230 is modified (phosphotyrosine). Aspartate 231, phenylalanine 232, aspartate 233, serine 236, lysine 237, aspartate 239, aspartate 304, aspartate 310, aspartate 364, and aspartate 366 together coordinate Ca(2+). Threonine 386 carries the post-translational modification Phosphothreonine.

This sequence belongs to the synaptotagmin family. Homotetramer. Heterodimer; heterodimerizes with SYT1 in presence of calcium. Interacts with SCAMP5. Interacts with STON2. Interacts with PRRT2. In terms of assembly, (Microbial infection) Interacts with C.botulinum neurotoxin type B (BoNT/B, botB). As to quaternary structure, (Microbial infection) Interacts with C.botulinum neurotoxin type G (BoNT/G, botG). Ca(2+) serves as cofactor. In terms of processing, phosphorylation at Thr-202 by WNK1, changes the calcium requirement for SYT2-binding to phospholipid membranes.

The protein localises to the cytoplasmic vesicle. The protein resides in the secretory vesicle. Its subcellular location is the synaptic vesicle membrane. It is found in the chromaffin granule membrane. It localises to the cytoplasm. Exhibits calcium-dependent phospholipid and inositol polyphosphate binding properties. May have a regulatory role in the membrane interactions during trafficking of synaptic vesicles at the active zone of the synapse. Plays a role in dendrite formation by melanocytes. In terms of biological role, (Microbial infection) Receptor for C.botulinum neurotoxin type B (BoNT/B, botB); interaction is improved in the presence of gangliosides. The toxin binds via the vesicular domain (residues 47-60). Functionally, (Microbial infection) Receptor for C.botulinum neurotoxin type G (BoNT/G, botG); gangliosides are not required for (or only very slightly improve) binding to a membrane-anchored receptor fragment. The toxin binds via the vesicular domain (residues 47-55). This chain is Synaptotagmin-2, found in Mus musculus (Mouse).